The primary structure comprises 201 residues: Large ribosomal subunit protein uL4 (201 aa).

Residues 45–66 (AQKSRAEVVGSNKKPWRQKGTG) are disordered.

This sequence belongs to the universal ribosomal protein uL4 family. In terms of assembly, part of the 50S ribosomal subunit.

One of the primary rRNA binding proteins, this protein initially binds near the 5'-end of the 23S rRNA. It is important during the early stages of 50S assembly. It makes multiple contacts with different domains of the 23S rRNA in the assembled 50S subunit and ribosome. In terms of biological role, forms part of the polypeptide exit tunnel. This is Large ribosomal subunit protein uL4 from Baumannia cicadellinicola subsp. Homalodisca coagulata.